The following is a 56-amino-acid chain: UPF0391 membrane protein Noc_0482 (56 aa).

A run of 2 helical transmembrane segments spans residues 1–21 (MFGW…FGFT) and 29–49 (HIAW…LLLG).

The protein belongs to the UPF0391 family.

The protein resides in the cell membrane. This Nitrosococcus oceani (strain ATCC 19707 / BCRC 17464 / JCM 30415 / NCIMB 11848 / C-107) protein is UPF0391 membrane protein Noc_0482.